A 1358-amino-acid chain; its full sequence is Protein STU1 (1358 aa).

2 disordered regions span residues 915–950 and 970–990; these read FVAD…SHGF and QPET…DESN. A compositionally biased stretch (basic and acidic residues) spans 926 to 949; that stretch reads DDTKKNGSDVVDHEEIRDHEESHG. Residues 973–990 show a composition bias toward acidic residues; sequence TVDENVDPMEVDSPDESN.

The protein belongs to the CLASP family. Interacts with microtubules.

Its subcellular location is the cytoplasm. It is found in the cytoskeleton. The protein localises to the nucleus. It localises to the spindle. In terms of biological role, microtubule binding protein that promotes the stabilization of dynamic microtubules. Required for mitotic spindle formation. The sequence is that of Protein STU1 (STU1) from Kluyveromyces lactis (strain ATCC 8585 / CBS 2359 / DSM 70799 / NBRC 1267 / NRRL Y-1140 / WM37) (Yeast).